The primary structure comprises 703 residues: Zinc finger protein 750 (703 aa).

The CCHC-type zinc-finger motif lies at 25–51; sequence YKCFQCPFTCNEKSHLFNHMKYGLCKN. Zn(2+)-binding residues include Cys27, Cys30, His43, and Cys49. Disordered regions lie at residues 64 to 113, 350 to 527, 553 to 614, and 630 to 703; these read KCPK…DAKE, PASS…YGPM, WAPR…KQTA, and RVAD…TRVS. A compositionally biased stretch (polar residues) spans 67-106; the sequence is KSSSLDPKQTHQPEPTSKPATSKSLLNGLSSFDPKSQQGS. The span at 352 to 361 shows a compositional bias: low complexity; it reads SSPSELNLSS. Residues 367-394 are compositionally biased toward basic and acidic residues; that stretch reads TECEKGSPVPEAKDPSKDGQRDAEEAKM. Polar residues-rich tracts occupy residues 410–421 and 456–477; these read SPTNFTQTSQTF and GSES…SLQA. Residues 574–611 show a composition bias toward basic and acidic residues; sequence TETKGSEDRTSRVETPQDKAHSRTTPDVHTEDSSDEQK. The segment covering 639-655 has biased composition (polar residues); that stretch reads QEPTRQDVPTLSATENL.

The protein resides in the nucleus. Functionally, transcription factor involved in epidermis differentiation. Required for terminal epidermal differentiation: acts downstream of p63/TP63 and activates expression of late epidermal differentiation genes. Specifically binds to the promoter of KLF4 and promotes its expression. The chain is Zinc finger protein 750 (Znf750) from Mus musculus (Mouse).